The sequence spans 462 residues: Glutamate--tRNA ligase (462 aa).

Positions proline 11–asparagine 21 match the 'HIGH' region motif. The 'KMSKS' region motif lies at lysine 243–arginine 247. Residue lysine 246 participates in ATP binding.

Belongs to the class-I aminoacyl-tRNA synthetase family. Glutamate--tRNA ligase type 1 subfamily. Monomer.

Its subcellular location is the cytoplasm. It catalyses the reaction tRNA(Glu) + L-glutamate + ATP = L-glutamyl-tRNA(Glu) + AMP + diphosphate. Functionally, catalyzes the attachment of glutamate to tRNA(Glu) in a two-step reaction: glutamate is first activated by ATP to form Glu-AMP and then transferred to the acceptor end of tRNA(Glu). The polypeptide is Glutamate--tRNA ligase (Albidiferax ferrireducens (strain ATCC BAA-621 / DSM 15236 / T118) (Rhodoferax ferrireducens)).